Reading from the N-terminus, the 246-residue chain is Myelin protein P0 (246 aa).

The first 27 residues, 1-27, serve as a signal peptide directing secretion; the sequence is MFRDLKPAYLFCCSVLYAFSVLRPSQG. The Ig-like V-type domain maps to 28–143; that stretch reads ISVSTHHNLH…VGTSSDVHLT (116 aa). Over 28 to 150 the chain is Extracellular; the sequence is ISVSTHHNLH…HLTVYDKIPP (123 aa). Cys48 and Cys125 form a disulfide bridge. Asn120 is a glycosylation site (N-linked (GlcNAc...) (complex) asparagine). A helical membrane pass occupies residues 151–178; sequence VGAGVVSGAIIGTFLGIILLIVGGLYLF. The Cytoplasmic portion of the chain corresponds to 179–246; sequence RYIVRRRARS…KLSESKRDKK (68 aa). A disordered region spans residues 200 to 246; the sequence is AERGKVSGKAGTVSKGPVLYATLDQSKSGKGASEKKSKLSESKRDKK. The segment covering 231–246 has biased composition (basic and acidic residues); it reads ASEKKSKLSESKRDKK.

It belongs to the myelin P0 protein family. Post-translationally, N-glycan is sulfated. In terms of tissue distribution, found only in peripheral nervous system Schwann cells.

It is found in the cell membrane. In terms of biological role, creation of an extracellular membrane face which guides the wrapping process and ultimately compacts adjacent lamellae. The sequence is that of Myelin protein P0 (mpz) from Heterodontus francisci (Horn shark).